Reading from the N-terminus, the 259-residue chain is Probable ABC transporter permease protein RBE_1340 (259 aa).

Helical transmembrane passes span 25 to 45, 49 to 69, 148 to 168, 195 to 215, and 237 to 257; these read IFSLAAITSIIRPPLYFSLII, LFIGFYSLPVVAMTTFFSGAV, VIAAIITMPCLVLIGDVIGVM, PIDVISGLVKAGVFGFIISII, and AVVNSSILILISNYLITELFF.

It belongs to the MlaE permease family.

The protein localises to the cell inner membrane. Functionally, could be part of an ABC transporter complex. The chain is Probable ABC transporter permease protein RBE_1340 from Rickettsia bellii (strain RML369-C).